A 115-amino-acid polypeptide reads, in one-letter code: Superoxide reductase (115 aa).

6 residues coordinate Fe cation: Glu-14, His-16, His-41, His-47, Cys-102, and His-105.

The protein belongs to the desulfoferrodoxin family. In terms of assembly, homotetramer. The cofactor is Fe cation.

It carries out the reaction reduced [rubredoxin] + superoxide + 2 H(+) = oxidized [rubredoxin] + H2O2. Its function is as follows. Uses electrons from reduced NADP, by way of rubredoxin and an oxidoreductase, to catalyze the reduction of superoxide to hydrogen peroxide. The polypeptide is Superoxide reductase (sorA) (Pyrococcus horikoshii (strain ATCC 700860 / DSM 12428 / JCM 9974 / NBRC 100139 / OT-3)).